A 274-amino-acid polypeptide reads, in one-letter code: NAD kinase (274 aa).

The active-site Proton acceptor is the aspartate 61. NAD(+) contacts are provided by residues 61 to 62 (DG), lysine 66, 134 to 135 (ND), lysine 145, aspartate 164, and 175 to 180 (TAYSLS).

Belongs to the NAD kinase family. It depends on a divalent metal cation as a cofactor.

The protein resides in the cytoplasm. The catalysed reaction is NAD(+) + ATP = ADP + NADP(+) + H(+). Its function is as follows. Involved in the regulation of the intracellular balance of NAD and NADP, and is a key enzyme in the biosynthesis of NADP. Catalyzes specifically the phosphorylation on 2'-hydroxyl of the adenosine moiety of NAD to yield NADP. The sequence is that of NAD kinase from Clostridium tetani (strain Massachusetts / E88).